Reading from the N-terminus, the 85-residue chain is Putative membrane protein insertion efficiency factor (85 aa).

It belongs to the UPF0161 family.

It is found in the cell inner membrane. Its function is as follows. Could be involved in insertion of integral membrane proteins into the membrane. The polypeptide is Putative membrane protein insertion efficiency factor (Escherichia fergusonii (strain ATCC 35469 / DSM 13698 / CCUG 18766 / IAM 14443 / JCM 21226 / LMG 7866 / NBRC 102419 / NCTC 12128 / CDC 0568-73)).